Here is a 379-residue protein sequence, read N- to C-terminus: Chaperone protein DnaJ (379 aa).

A J domain is found at 5 to 70 (DYYETLEVSQ…QKRAAYDQYG (66 aa)). The segment at 135-213 (GKSLEIKVPT…CRGQGRVEKT (79 aa)) adopts a CR-type zinc-finger fold. Zn(2+) contacts are provided by C148, C151, C165, C168, C187, C190, C201, and C204. 4 CXXCXGXG motif repeats span residues 148–155 (CEPCDGSG), 165–172 (CSTCHGHG), 187–194 (CPTCSGKG), and 201–208 (CTSCRGQG).

This sequence belongs to the DnaJ family. Homodimer. It depends on Zn(2+) as a cofactor.

Its subcellular location is the cytoplasm. Participates actively in the response to hyperosmotic and heat shock by preventing the aggregation of stress-denatured proteins and by disaggregating proteins, also in an autonomous, DnaK-independent fashion. Unfolded proteins bind initially to DnaJ; upon interaction with the DnaJ-bound protein, DnaK hydrolyzes its bound ATP, resulting in the formation of a stable complex. GrpE releases ADP from DnaK; ATP binding to DnaK triggers the release of the substrate protein, thus completing the reaction cycle. Several rounds of ATP-dependent interactions between DnaJ, DnaK and GrpE are required for fully efficient folding. Also involved, together with DnaK and GrpE, in the DNA replication of plasmids through activation of initiation proteins. This Colwellia maris protein is Chaperone protein DnaJ.